Consider the following 229-residue polypeptide: Transmembrane protein 182 (229 aa).

The first 26 residues, 1–26 (MRLNVAVFFGALFGALGVLLFLVAFG), serve as a signal peptide directing secretion. The Extracellular portion of the chain corresponds to 27 to 114 (SDYWLLATEV…SYDSAIIYRG (88 aa)). The N-linked (GlcNAc...) asparagine glycan is linked to N47. The tract at residues 49–59 (TFHHEGFFWRC) is interaction with ITGB1. N-linked (GlcNAc...) asparagine glycosylation is found at N68, N85, and N102. The chain crosses the membrane as a helical span at residues 115-135 (FWAVLLLLGVVAALTASFLII). The Cytoplasmic portion of the chain corresponds to 136–153 (CAAPFSSHFLYKAGGGSY). A helical membrane pass occupies residues 154–174 (IASGVLFSLVVILYVIWVQAV). Over 175–200 (ADMESYRALRMRDCWEFTPSILYGWS) the chain is Extracellular. The chain crosses the membrane as a helical span at residues 201–221 (FFLAPAGVFFSLLAGLLFLVV). Over 222–229 (GRHIQIHH) the chain is Cytoplasmic.

It belongs to the TMEM182 family. In terms of assembly, interacts with ITGB1. In terms of tissue distribution, highly expressed in white adipose tissues (WAT), with 10-fold to 20-fold higher levels than in brown adipose tissue (BAT). Also expressed in skeletal muscle, heart and lung. Lower relative levels of expression in kidney, spleen, testis, brain and liver.

It is found in the cell membrane. In terms of biological role, negatively regulates myogenesis and skeletal muscle regeneration via its association with ITGB1. Modulates ITGB1 activation by decreasing ITGB1-LAMB1 interaction and inhibiting ITGB1-mediated intracellular signaling during myogenesis. The sequence is that of Transmembrane protein 182 (Tmem182) from Mus musculus (Mouse).